The chain runs to 24 residues: Calcium-binding shell glycoprotein P50 (24 aa).

A disordered region spans residues 1–24 (KDALEHTGFAPKKDGEEHVEWNYN).

Post-translationally, glycosylated. As to expression, nacreous and prismatic layers of the shell.

Calcium-binding. This chain is Calcium-binding shell glycoprotein P50, found in Unio pictorum (Painter's mussel).